We begin with the raw amino-acid sequence, 388 residues long: Putative 8-amino-7-oxononanoate synthase (388 aa).

Residue Arg18 coordinates substrate. Position 105-106 (105-106 (GY)) interacts with pyridoxal 5'-phosphate. His130 lines the substrate pocket. Residues Ser176, 201–204 (DDAH), and 232–235 (TLSK) contribute to the pyridoxal 5'-phosphate site. At Lys235 the chain carries N6-(pyridoxal phosphate)lysine. A substrate-binding site is contributed by Thr349.

It belongs to the class-II pyridoxal-phosphate-dependent aminotransferase family. BioF subfamily. Homodimer. Requires pyridoxal 5'-phosphate as cofactor.

The catalysed reaction is 6-carboxyhexanoyl-[ACP] + L-alanine + H(+) = (8S)-8-amino-7-oxononanoate + holo-[ACP] + CO2. Its pathway is cofactor biosynthesis; biotin biosynthesis. Functionally, catalyzes the decarboxylative condensation of pimeloyl-[acyl-carrier protein] and L-alanine to produce 8-amino-7-oxononanoate (AON), [acyl-carrier protein], and carbon dioxide. This Acetivibrio thermocellus (strain ATCC 27405 / DSM 1237 / JCM 9322 / NBRC 103400 / NCIMB 10682 / NRRL B-4536 / VPI 7372) (Clostridium thermocellum) protein is Putative 8-amino-7-oxononanoate synthase (bioF).